The sequence spans 296 residues: Chondrolectin (296 aa).

Positions 1 to 20 are cleaved as a signal peptide; the sequence is MRATLRILCALTFLVSCSRG. The Extracellular portion of the chain corresponds to 21-238; that stretch reads ARVVSGQTVC…RLIIAGPSSM (218 aa). The C-type lectin domain maps to 38 to 187; that stretch reads CYKIAYFKDV…CNMKHNFICK (150 aa). The span at 197–221 shows a compositional bias: basic and acidic residues; it reads VQSDRPGGHDVDLSTEDKEDRRTPP. The tract at residues 197 to 229 is disordered; that stretch reads VQSDRPGGHDVDLSTEDKEDRRTPPTDEDESPR. Residues 239–266 form a helical membrane-spanning segment; the sequence is LLIYVIIPTIPLLLLILVASGTCCFQML. Residues 267-296 lie on the Cytoplasmic side of the membrane; it reads SKSKPRTKTSVNQSTLWISKTPKIDSGMEV.

As to expression, expressed in developing motor neurons.

It is found in the membrane. Its function is as follows. Plays a role in the development of the nervous system such as in neurite outgrowth and elongation. Involved in motor axon growth and guidance. Required for correct interactions of motor axons with the horizontal myoseptum. The protein is Chondrolectin (chodl) of Danio rerio (Zebrafish).